The chain runs to 473 residues: Anthocyanidin 5,3-O-glucosyltransferase (473 aa).

Belongs to the UDP-glycosyltransferase family.

The protein operates within pigment biosynthesis; anthocyanin biosynthesis. Functionally, sequentially catalyzes two glycosylation steps at the 5-OH and 3-OH positions of anthocyanidin. Unglycosylated anthocyanidin or anthocyanidin 5-O-glucoside, but not anthocyanidin 3-O-glucoside, can be used as glucosyl acceptor. This is Anthocyanidin 5,3-O-glucosyltransferase (RhGT1) from Rosa hybrid cultivar.